A 607-amino-acid polypeptide reads, in one-letter code: uncharacterized protein (607 aa).

Disordered regions lie at residues 28–114 (GAER…KLRR) and 142–188 (DQER…NNSS). Over residues 35 to 50 (SSHGSINSRSASPNKA) the composition is skewed to polar residues. Basic and acidic residues-rich tracts occupy residues 90 to 102 (VNGEGAEKGDHDT) and 161 to 174 (KENKSLKTTAKDLS). Low complexity predominate over residues 177–188 (SSSSMKKANNSS). PHD-type zinc fingers lie at residues 263–312 (NDYC…CKHH) and 406–459 (PILC…HSDH).

This is an uncharacterized protein from Schizosaccharomyces pombe (strain 972 / ATCC 24843) (Fission yeast).